Consider the following 432-residue polypeptide: Glutamate-1-semialdehyde 2,1-aminomutase (432 aa).

K271 is subject to N6-(pyridoxal phosphate)lysine.

The protein belongs to the class-III pyridoxal-phosphate-dependent aminotransferase family. HemL subfamily. Homodimer. It depends on pyridoxal 5'-phosphate as a cofactor.

The protein localises to the cytoplasm. It carries out the reaction (S)-4-amino-5-oxopentanoate = 5-aminolevulinate. It participates in porphyrin-containing compound metabolism; protoporphyrin-IX biosynthesis; 5-aminolevulinate from L-glutamyl-tRNA(Glu): step 2/2. Its pathway is porphyrin-containing compound metabolism; chlorophyll biosynthesis. The sequence is that of Glutamate-1-semialdehyde 2,1-aminomutase from Prochlorococcus marinus (strain NATL2A).